A 309-amino-acid chain; its full sequence is Homoserine O-succinyltransferase (309 aa).

The active-site Acyl-thioester intermediate is the Cys-142. Substrate-binding residues include Lys-163 and Ser-192. Residue His-235 is the Proton acceptor of the active site. The active site involves Glu-237. Arg-249 provides a ligand contact to substrate.

The protein belongs to the MetA family.

The protein resides in the cytoplasm. The catalysed reaction is L-homoserine + succinyl-CoA = O-succinyl-L-homoserine + CoA. It functions in the pathway amino-acid biosynthesis; L-methionine biosynthesis via de novo pathway; O-succinyl-L-homoserine from L-homoserine: step 1/1. In terms of biological role, transfers a succinyl group from succinyl-CoA to L-homoserine, forming succinyl-L-homoserine. The protein is Homoserine O-succinyltransferase of Klebsiella pneumoniae subsp. pneumoniae (strain ATCC 700721 / MGH 78578).